A 125-amino-acid chain; its full sequence is MSVLGLGTDIVEIERIRSQLERGGDRLAKRILTESELAIFVGSGQRELYLAKRFAAKEAVAKALGTGIGRGVSFQHIETYSDEFGAPCVRLSDGALERMQQLGGSQIRLSIADERHYAVATAILC.

D9 and E58 together coordinate Mg(2+).

The protein belongs to the P-Pant transferase superfamily. AcpS family. Mg(2+) is required as a cofactor.

The protein localises to the cytoplasm. It catalyses the reaction apo-[ACP] + CoA = holo-[ACP] + adenosine 3',5'-bisphosphate + H(+). Transfers the 4'-phosphopantetheine moiety from coenzyme A to a Ser of acyl-carrier-protein. In Shewanella amazonensis (strain ATCC BAA-1098 / SB2B), this protein is Holo-[acyl-carrier-protein] synthase.